The sequence spans 294 residues: Flavin-dependent thymidylate synthase (294 aa).

The 224-residue stretch at Gly-27–Tyr-250 folds into the ThyX domain. FAD contacts are provided by residues Thr-73, Arg-96–Arg-98, and Glu-104. DUMP contacts are provided by residues Gln-93–Arg-96, Glu-104–Arg-108, and Arg-189. The short motif at Arg-96–Ser-106 is the ThyX motif element. FAD is bound by residues Asn-205–His-207 and His-211. Residue Arg-216 coordinates dUMP. The active-site Involved in ionization of N3 of dUMP, leading to its activation is Arg-216.

Belongs to the thymidylate synthase ThyX family. Homotetramer. FAD serves as cofactor.

It catalyses the reaction dUMP + (6R)-5,10-methylene-5,6,7,8-tetrahydrofolate + NADPH + H(+) = dTMP + (6S)-5,6,7,8-tetrahydrofolate + NADP(+). It participates in pyrimidine metabolism; dTTP biosynthesis. Functionally, catalyzes the reductive methylation of 2'-deoxyuridine-5'-monophosphate (dUMP) to 2'-deoxythymidine-5'-monophosphate (dTMP) while utilizing 5,10-methylenetetrahydrofolate (mTHF) as the methyl donor, and NADPH and FADH(2) as the reductant. In Rickettsia bellii (strain RML369-C), this protein is Flavin-dependent thymidylate synthase.